Here is a 244-residue protein sequence, read N- to C-terminus: Large ribosomal subunit protein uL30B (244 aa).

A compositionally biased stretch (polar residues) spans methionine 1–serine 11. The segment at methionine 1–lysine 21 is disordered.

It belongs to the universal ribosomal protein uL30 family. In terms of assembly, component of the large ribosomal subunit (LSU). Mature yeast ribosomes consist of a small (40S) and a large (60S) subunit. The 40S small subunit contains 1 molecule of ribosomal RNA (18S rRNA) and 33 different proteins (encoded by 57 genes). The large 60S subunit contains 3 rRNA molecules (25S, 5.8S and 5S rRNA) and 46 different proteins (encoded by 81 genes).

The protein localises to the cytoplasm. Its function is as follows. Component of the ribosome, a large ribonucleoprotein complex responsible for the synthesis of proteins in the cell. The small ribosomal subunit (SSU) binds messenger RNAs (mRNAs) and translates the encoded message by selecting cognate aminoacyl-transfer RNA (tRNA) molecules. The large subunit (LSU) contains the ribosomal catalytic site termed the peptidyl transferase center (PTC), which catalyzes the formation of peptide bonds, thereby polymerizing the amino acids delivered by tRNAs into a polypeptide chain. The nascent polypeptides leave the ribosome through a tunnel in the LSU and interact with protein factors that function in enzymatic processing, targeting, and the membrane insertion of nascent chains at the exit of the ribosomal tunnel. The polypeptide is Large ribosomal subunit protein uL30B (Saccharomyces cerevisiae (strain ATCC 204508 / S288c) (Baker's yeast)).